The sequence spans 519 residues: PTS system mannitol-specific EIICB component (519 aa).

The Cytoplasmic portion of the chain corresponds to 1–30; that stretch reads MAQTETQEKKGLGRKVQAFGSFLSSMIMPN. Residues 19-351 enclose the PTS EIIC type-2 domain; that stretch reads FGSFLSSMIM…MKFTKEPKQD (333 aa). Residues 31–52 traverse the membrane as a helical segment; the sequence is IGAFIAWGFIAAIFIDNGWYPN. Over 53-56 the chain is Extracellular; it reads KELS. The helical transmembrane segment at 57 to 77 threads the bilayer; sequence QLAGPMITYLIPLLIAFSGGR. Residues 78-141 are Cytoplasmic-facing; sequence LIHDLRGGIV…QGFEMLFNNF (64 aa). A helical transmembrane segment spans residues 142-163; that stretch reads SAGILAFIMTILGFKLLAPIMQ. The Extracellular portion of the chain corresponds to 164–172; the sequence is FIMHILSVA. Residues 173–193 traverse the membrane as a helical segment; sequence VEFLVHLHLLPIVSIIVEPAK. Topologically, residues 194-280 are cytoplasmic; sequence ILFLNNAINH…VLMRPLLFIA (87 aa). A helical transmembrane segment spans residues 281 to 300; that stretch reads VILGGMTGVATYQATGFGFK. The Extracellular segment spans residues 301-320; that stretch reads SPASPGSFIVYCLNAPKGEF. A helical membrane pass occupies residues 321–342; sequence LHMVLGVFLAALVSFVVAALIM. Residues 343-519 lie on the Cytoplasmic side of the membrane; the sequence is KFTKEPKQDL…NNLKKDQDKA (177 aa). Residues 366–406 are disordered; sequence KSSVSSKLTGATTGTGAAGVAANKANGEDQNEASSEDEEED. A compositionally biased stretch (low complexity) spans 367–387; it reads SSVSSKLTGATTGTGAAGVAA. A compositionally biased stretch (acidic residues) spans 394-406; that stretch reads DQNEASSEDEEED. The 95-residue stretch at 425-519 folds into the PTS EIIB type-2 domain; that stretch reads DHVIFACDAG…NNLKKDQDKA (95 aa). The active-site Phosphocysteine intermediate; for EIIB activity is Cys431. The residue at position 431 (Cys431) is a Phosphocysteine; by EIIA.

As to quaternary structure, homodimer.

The protein localises to the cell membrane. It catalyses the reaction D-mannitol(out) + N(pros)-phospho-L-histidyl-[protein] = D-mannitol 1-phosphate(in) + L-histidyl-[protein]. The phosphoenolpyruvate-dependent sugar phosphotransferase system (sugar PTS), a major carbohydrate active transport system, catalyzes the phosphorylation of incoming sugar substrates concomitantly with their translocation across the cell membrane. The enzyme II CmtAB PTS system is involved in D-mannitol transport. This chain is PTS system mannitol-specific EIICB component (mtlA), found in Staphylococcus haemolyticus (strain JCSC1435).